Reading from the N-terminus, the 219-residue chain is Putative ankyrin repeat protein BB_0399 (219 aa).

ANK repeat units follow at residues 104–133 (YKIS…SLNQ), 137–166 (TGYS…DLSF), and 170–199 (NRKT…YIDD).

This Borreliella burgdorferi (strain ATCC 35210 / DSM 4680 / CIP 102532 / B31) (Borrelia burgdorferi) protein is Putative ankyrin repeat protein BB_0399.